The following is a 65-amino-acid chain: UPF0434 protein BBta_0300 (65 aa).

The protein belongs to the UPF0434 family.

The polypeptide is UPF0434 protein BBta_0300 (Bradyrhizobium sp. (strain BTAi1 / ATCC BAA-1182)).